Reading from the N-terminus, the 630-residue chain is MALPTARPLLGSCGTPALGSLLFLLFSLGWVQPSRTLAGETGQEAAPLDGVLANPPNISSLSPRQLLGFPCAEVSGLSTERVRELAVALAQKNVKLSTEQLRCLAHRLSEPPEDLDALPLDLLLFLNPDAFSGPQACTRFFSRITKANVDLLPRGAPERQRLLPAALACWGVRGSLLSEADVRALGGLACDLPGRFVAESAEVLLPRLVSCPGPLDQDQQEAARAALQGGGPPYGPPSTWSVSTMDALRGLLPVLGQPIIRSIPQGIVAAWRQRSSRDPSWRQPERTILRPRFRREVEKTACPSGKKAREIDESLIFYKKWELEACVDAALLATQMDRVNAIPFTYEQLDVLKHKLDELYPQGYPESVIQHLGYLFLKMSPEDIRKWNVTSLETLKALLEVNKGHEMSPQAPRRPLPQVATLIDRFVKGRGQLDKDTLDTLTAFYPGYLCSLSPEELSSVPPSSIWAVRPQDLDTCDPRQLDVLYPKARLAFQNMNGSEYFVKIQSFLGGAPTEDLKALSQQNVSMDLATFMKLRTDAVLPLTVAEVQKLLGPHVEGLKAEERHRPVRDWILRQRQDDLDTLGLGLQGGIPNGYLVLDLSMQEALSGTPCLLGPGPVLTVLALLLASTLA.

The first 36 residues, 1–36 (MALPTARPLLGSCGTPALGSLLFLLFSLGWVQPSRT), serve as a signal peptide directing secretion. An N-linked (GlcNAc...) asparagine glycan is attached at Asn57. A Phosphoserine; by FAM20C modification is found at Ser200. A required for megakaryocyte-potentiating factor activity region spans residues 262 to 286 (SIPQGIVAAWRQRSSRDPSWRQPER). Cys302 and Cys326 are disulfide-bonded. Asn388, Asn496, and Asn523 each carry an N-linked (GlcNAc...) asparagine glycan. Residue Ser606 is the site of GPI-anchor amidated serine attachment. The propeptide at 607-630 (GTPCLLGPGPVLTVLALLLASTLA) is removed in mature form.

The protein belongs to the mesothelin family. As to quaternary structure, interacts with MUC16. Both MPF and the cleaved form of mesothelin are N-glycosylated. Post-translationally, proteolytically cleaved by a furin-like convertase to generate megakaryocyte-potentiating factor (MPF), and the cleaved form of mesothelin. In terms of tissue distribution, expressed in lung. Expressed at low levels in heart, placenta and kidney. Expressed in mesothelial cells. Highly expressed in mesotheliomas, ovarian cancers, and some squamous cell carcinomas (at protein level).

It localises to the cell membrane. Its subcellular location is the golgi apparatus. The protein localises to the secreted. In terms of biological role, membrane-anchored forms may play a role in cellular adhesion. Functionally, megakaryocyte-potentiating factor (MPF) potentiates megakaryocyte colony formation in vitro. The chain is Mesothelin (MSLN) from Homo sapiens (Human).